We begin with the raw amino-acid sequence, 1888 residues long: Zinc finger protein 106 (1888 aa).

The C2H2-type 1; atypical zinc-finger motif lies at 5 to 29 (RKCILCHIVYGSKKEMDEHMRSMLH). The C2H2-type 2; atypical zinc-finger motif lies at 43–67 (HECRVCRVTEVGLSAYAKHISGQLH). Positions 68 to 187 (KDNVDAQERE…GPRGSSVWHK (120 aa)) are disordered. The span at 75–89 (EREDDGKEEEEEEYF) shows a compositional bias: acidic residues. Basic and acidic residues-rich tracts occupy residues 90–108 (DKELVQLIQERKEQSRQDE), 118–138 (SDDRQPQWRREDRIPYQDRES), and 150–160 (PQRDWKWEKDG). Lysine 91 is covalently cross-linked (Glycyl lysine isopeptide (Lys-Gly) (interchain with G-Cter in SUMO2)). Lysine 155 is covalently cross-linked (Glycyl lysine isopeptide (Lys-Gly) (interchain with G-Cter in SUMO2)). Residues 161 to 175 (FNSTRKNSFPHSLRN) show a composition bias toward polar residues. Glycyl lysine isopeptide (Lys-Gly) (interchain with G-Cter in SUMO2) cross-links involve residues lysine 265 and lysine 309. Disordered regions lie at residues 287 to 326 (KKSNKPSKYSQERCKWQRQDRDKAAKYRSPPEGYASDTFP) and 338 to 362 (RESQTTKQTDTAASKINGKNGTKAR). Residues 296 to 311 (SQERCKWQRQDRDKAA) show a composition bias toward basic and acidic residues. Over residues 342–357 (TTKQTDTAASKINGKN) the composition is skewed to polar residues. Glycyl lysine isopeptide (Lys-Gly) (interchain with G-Cter in SUMO2) cross-links involve residues lysine 375, lysine 384, lysine 390, lysine 435, lysine 469, and lysine 479. Disordered regions lie at residues 410–437 (KPVDKTSNPPVIKTQKAGPPGSPSHKAI) and 453–525 (TEQS…TSKS). A compositionally biased stretch (basic residues) spans 481–491 (GPHKQNLKNRS). Residues 507–525 (LLNTSTLEGSHGSSYTSKS) show a composition bias toward polar residues. Glycyl lysine isopeptide (Lys-Gly) (interchain with G-Cter in SUMO2) cross-links involve residues lysine 524, lysine 534, and lysine 544. Residues 537–617 (KTVSGTQKEP…SAMTSDAENH (81 aa)) form a disordered region. Over residues 551–572 (NNTSQKAQDTVLQCPKTLQNPL) the composition is skewed to polar residues. A Glycyl lysine isopeptide (Lys-Gly) (interchain with G-Cter in SUMO2) cross-link involves residue lysine 577. Residues 577 to 593 (KRMENDAKESSVEESAK) are compositionally biased toward basic and acidic residues. The span at 597–613 (SIESQPHSAGNSAMTSD) shows a compositional bias: polar residues. Lysine 620 participates in a covalent cross-link: Glycyl lysine isopeptide (Lys-Gly) (interchain with G-Cter in SUMO2). Residues 635 to 661 (STHTVDKEQGSQIPGTPENLSTSPRNS) form a disordered region. Polar residues predominate over residues 644-661 (GSQIPGTPENLSTSPRNS). 2 positions are modified to phosphoserine: serine 657 and serine 677. Glycyl lysine isopeptide (Lys-Gly) (interchain with G-Cter in SUMO2) cross-links involve residues lysine 687, lysine 700, lysine 721, lysine 738, lysine 758, lysine 792, and lysine 824. Residues 696 to 728 (NNLVKSDGPFETESFEDTSLDTELQKPDLNNQP) are disordered. A phosphoserine mark is found at serine 876, serine 878, serine 881, and serine 909. The disordered stretch occupies residues 894–920 (TGEGTGKENEAQQSPSPNTALSAAQSQ). A compositionally biased stretch (polar residues) spans 904 to 920 (AQQSPSPNTALSAAQSQ). Lysine 921 participates in a covalent cross-link: Glycyl lysine isopeptide (Lys-Gly) (interchain with G-Cter in SUMO2). Position 953 is a phosphoserine (serine 953). The span at 968 to 986 (ARDLHSQERSTPLSERHAQ) shows a compositional bias: basic and acidic residues. Disordered stretches follow at residues 968–1064 (ARDL…ERSQ), 1281–1461 (EQGN…SKKD), and 1468–1487 (QNPIETSRSGCDEVSSTSEL). The segment covering 992 to 1008 (GNSLSSNASSGHAVSSL) has biased composition (low complexity). Residues 1013–1022 (TDSSCTSGAE) are compositionally biased toward polar residues. Position 1036 is a phosphothreonine (threonine 1036). Phosphoserine is present on residues serine 1040, serine 1041, and serine 1046. The segment covering 1050–1060 (KNKRRKIKGKK) has biased composition (basic residues). Residues 1281-1296 (EQGNSRSKGNSPSCQS) show a composition bias toward polar residues. Phosphoserine occurs at positions 1291, 1293, and 1296. Lysine 1310 is covalently cross-linked (Glycyl lysine isopeptide (Lys-Gly) (interchain with G-Cter in SUMO2)). Positions 1312-1321 (SSGSEACSSS) are enriched in low complexity. Serine 1313 carries the post-translational modification Phosphoserine. Residue lysine 1335 forms a Glycyl lysine isopeptide (Lys-Gly) (interchain with G-Cter in SUMO2) linkage. The segment covering 1338 to 1354 (QSPADQPEQQAESTLAS) has biased composition (polar residues). Serine 1339 is modified (phosphoserine). Residues 1360–1373 (SKKKKKLRKKKTLR) are compositionally biased toward basic residues. Residue serine 1381 is modified to Phosphoserine. Position 1383 is a phosphothreonine (threonine 1383). Glycyl lysine isopeptide (Lys-Gly) (interchain with G-Cter in SUMO2) cross-links involve residues lysine 1391, lysine 1403, lysine 1406, and lysine 1460. Positions 1450–1461 (GDEKPDSPSKKD) are enriched in basic and acidic residues. The span at 1470–1487 (PIETSRSGCDEVSSTSEL) shows a compositional bias: polar residues. Serine 1474 bears the Phosphoserine mark. Glycyl lysine isopeptide (Lys-Gly) (interchain with G-Cter in SUMO2) cross-links involve residues lysine 1492 and lysine 1509. The interval 1509–1531 (KASKHSSEISSEPGDDEEPTEGS) is disordered. WD repeat units follow at residues 1534 to 1573 (GHQAAVNAIQIFGNFLYTCSADTTVRVYNLVSRKCVGVFE), 1575 to 1618 (HTSK…EQLQ), 1659 to 1700 (HGPR…LLRT), 1703 to 1742 (GHSKTVLCMKVVNDLVFSGSSDQSVHAHNIHTGELVRIYK), 1743 to 1780 (GHNHAVTVVNILGKVMVTACLDKFVRVYELQSHDRLQV), and 1783 to 1820 (GHKDMIMCMTIHKSVIYTGCYDGSIQAVRLNLMQNYRC). Residue lysine 1590 forms a Glycyl lysine isopeptide (Lys-Gly) (interchain with G-Cter in SUMO2) linkage. A Glycyl lysine isopeptide (Lys-Gly) (interchain with G-Cter in SUMO2) cross-link involves residue lysine 1742. The C2H2-type 3; atypical zinc-finger motif lies at 1818 to 1843 (YRCWWYGCTLIFGVVDHLKQHLLTDH). Lysine 1869 participates in a covalent cross-link: Glycyl lysine isopeptide (Lys-Gly) (interchain with G-Cter in SUMO2).

As to quaternary structure, interacts with KNOP1. Interacts with TARDBP and NUP107. Interacts (via N-terminus) with RBM39. Interacts with the SH3 domains of FYN and GRB2. Post-translationally, phosphorylated by FYN in vitro. In terms of tissue distribution, widely expressed, with strongest expression in skeletal muscle, heart and brain (at protein level). Detected in spinal cord motor neurons.

It is found in the nucleus. The protein resides in the nucleolus. The protein localises to the nucleus speckle. Its function is as follows. RNA-binding protein. Specifically binds to 5'-GGGGCC-3' sequence repeats in RNA. Essential for maintenance of peripheral motor neuron and skeletal muscle function. Required for normal expression and/or alternative splicing of a number of genes in spinal cord and skeletal muscle, including the neurite outgrowth inhibitor RTN4. Also contributes to normal mitochondrial respiratory function in motor neurons, via an unknown mechanism. The sequence is that of Zinc finger protein 106 (Znf106) from Mus musculus (Mouse).